A 154-amino-acid polypeptide reads, in one-letter code: 3-hydroxyacyl-[acyl-carrier-protein] dehydratase FabZ (154 aa).

His54 is an active-site residue.

It belongs to the thioester dehydratase family. FabZ subfamily.

It localises to the cytoplasm. It carries out the reaction a (3R)-hydroxyacyl-[ACP] = a (2E)-enoyl-[ACP] + H2O. Functionally, involved in unsaturated fatty acids biosynthesis. Catalyzes the dehydration of short chain beta-hydroxyacyl-ACPs and long chain saturated and unsaturated beta-hydroxyacyl-ACPs. The polypeptide is 3-hydroxyacyl-[acyl-carrier-protein] dehydratase FabZ (Shewanella sp. (strain MR-4)).